A 148-amino-acid chain; its full sequence is Large ribosomal subunit protein bL9 (148 aa).

Belongs to the bacterial ribosomal protein bL9 family.

Its function is as follows. Binds to the 23S rRNA. This is Large ribosomal subunit protein bL9 from Acetivibrio thermocellus (strain ATCC 27405 / DSM 1237 / JCM 9322 / NBRC 103400 / NCIMB 10682 / NRRL B-4536 / VPI 7372) (Clostridium thermocellum).